We begin with the raw amino-acid sequence, 333 residues long: CRISPR-associated endonuclease Cas1 (333 aa).

E162, H226, and E241 together coordinate Mn(2+).

The protein belongs to the CRISPR-associated endonuclease Cas1 family. In terms of assembly, homodimer, forms a heterotetramer with a Cas2 homodimer. Mg(2+) serves as cofactor. It depends on Mn(2+) as a cofactor.

Its function is as follows. CRISPR (clustered regularly interspaced short palindromic repeat), is an adaptive immune system that provides protection against mobile genetic elements (viruses, transposable elements and conjugative plasmids). CRISPR clusters contain spacers, sequences complementary to antecedent mobile elements, and target invading nucleic acids. CRISPR clusters are transcribed and processed into CRISPR RNA (crRNA). Acts as a dsDNA endonuclease. Involved in the integration of spacer DNA into the CRISPR cassette. This Nanoarchaeum equitans (strain Kin4-M) protein is CRISPR-associated endonuclease Cas1.